The sequence spans 102 residues: Large ribosomal subunit protein bL21 (102 aa).

This sequence belongs to the bacterial ribosomal protein bL21 family. As to quaternary structure, part of the 50S ribosomal subunit. Contacts protein L20.

Its function is as follows. This protein binds to 23S rRNA in the presence of protein L20. The polypeptide is Large ribosomal subunit protein bL21 (Cutibacterium acnes (strain DSM 16379 / KPA171202) (Propionibacterium acnes)).